A 967-amino-acid chain; its full sequence is Importin-alpha re-exporter (967 aa).

The region spanning alanine 20–lysine 95 is the Importin N-terminal domain.

Belongs to the XPO2/CSE1 family. Binds with high affinity to importin-alpha only in the presence of RanGTP.

The protein localises to the cytoplasm. It is found in the nucleus envelope. In terms of biological role, export receptor for importin alpha. Mediates importin-alpha re-export from the nucleus to the cytoplasm after import substrates have been released into the nucleoplasm. The protein is Importin-alpha re-exporter (kap109) of Schizosaccharomyces pombe (strain 972 / ATCC 24843) (Fission yeast).